The following is a 352-amino-acid chain: Ion-translocating oxidoreductase complex subunit D (352 aa).

5 helical membrane passes run 20–40, 42–62, 78–109, 123–143, and 148–168; these read IMLL…WFFG, GTLV…ALVL, ALLT…VIIA, PAMI…TSWL, and IAVN…GHTA. At Thr187 the chain carries FMN phosphoryl threonine. The next 5 helical transmembrane spans lie at 214 to 234, 242 to 262, 267 to 287, 301 to 321, and 322 to 342; these read ILAG…GVWL, WHIP…GWLF, LAAP…FFIL, LIFG…GGYP, and DGVA…DYYT.

It belongs to the NqrB/RnfD family. In terms of assembly, the complex is composed of six subunits: RsxA, RsxB, RsxC, RsxD, RsxE and RsxG. Requires FMN as cofactor.

Its subcellular location is the cell inner membrane. Part of a membrane-bound complex that couples electron transfer with translocation of ions across the membrane. Required to maintain the reduced state of SoxR. This is Ion-translocating oxidoreductase complex subunit D from Escherichia coli O6:H1 (strain CFT073 / ATCC 700928 / UPEC).